The chain runs to 460 residues: Crocetin glucosyltransferase 2 (460 aa).

The active-site Proton acceptor is the His19. His19 contacts an anthocyanidin. Positions 133, 333, 348, 351, 352, 353, 356, 372, and 373 each coordinate UDP-alpha-D-glucose.

This sequence belongs to the UDP-glycosyltransferase family. Mainly expressed in fully developed stigmas.

It carries out the reaction crocetin + UDP-alpha-D-glucose = beta-D-glucosyl crocetin + UDP. The catalysed reaction is beta-D-glucosyl crocetin + UDP-alpha-D-glucose = bis(beta-D-glucosyl) crocetin + UDP. The enzyme catalyses beta-D-gentiobiosyl crocetin + UDP-alpha-D-glucose = beta-D-gentiobiosyl beta-D-glucosyl crocetin + UDP. Its function is as follows. Crocetin glucosyltransferase involved in the synthesis of crocin, one of the apocarotenoids responsible for the color and bitter taste of saffron. The chain is Crocetin glucosyltransferase 2 (GLT2) from Crocus sativus (Saffron).